Reading from the N-terminus, the 200-residue chain is Recombination protein RecR (200 aa).

A C4-type zinc finger spans residues Cys-59–Cys-74. Positions Ser-82–Pro-177 constitute a Toprim domain.

This sequence belongs to the RecR family.

Functionally, may play a role in DNA repair. It seems to be involved in an RecBC-independent recombinational process of DNA repair. It may act with RecF and RecO. The sequence is that of Recombination protein RecR from Phenylobacterium zucineum (strain HLK1).